The primary structure comprises 293 residues: 3-methyl-2-oxobutanoate hydroxymethyltransferase (293 aa).

The disordered stretch occupies residues 1–25; that stretch reads MTDSPTAGTPYGTLPPASPLPQRRP. Residues Asp67 and Asp110 each coordinate Mg(2+). Residues 67–68, Asp110, and Lys139 each bind 3-methyl-2-oxobutanoate; that span reads DS. Position 141 (Glu141) interacts with Mg(2+). Residue Glu208 is the Proton acceptor of the active site.

This sequence belongs to the PanB family. Homodecamer; pentamer of dimers. Requires Mg(2+) as cofactor.

It localises to the cytoplasm. The catalysed reaction is 3-methyl-2-oxobutanoate + (6R)-5,10-methylene-5,6,7,8-tetrahydrofolate + H2O = 2-dehydropantoate + (6S)-5,6,7,8-tetrahydrofolate. The protein operates within cofactor biosynthesis; (R)-pantothenate biosynthesis; (R)-pantoate from 3-methyl-2-oxobutanoate: step 1/2. Its function is as follows. Catalyzes the reversible reaction in which hydroxymethyl group from 5,10-methylenetetrahydrofolate is transferred onto alpha-ketoisovalerate to form ketopantoate. The chain is 3-methyl-2-oxobutanoate hydroxymethyltransferase from Acidovorax sp. (strain JS42).